A 134-amino-acid polypeptide reads, in one-letter code: MSWQAYVDDHLMCDIEGHEGHRLTAAAIVGHDGSVWAQSATFPQFKPEEMNGIMTDFNEPGHLAPTGLHLGGTKYMVIQGEAGAVIRGKKGSGGITIKKTGQALVCGIYEEPVTPGQCNMVVERLEDYLLEQGL.

Cys-13 and Cys-118 are oxidised to a cystine. Positions 84-100 (AVIRGKKGSGGITIKKT) match the Involved in PIP2 interaction motif. The residue at position 114 (Thr-114) is a Phosphothreonine.

Belongs to the profilin family. As to quaternary structure, occurs in many kinds of cells as a complex with monomeric actin in a 1:1 ratio. In terms of processing, phosphorylated by MAP kinases.

The protein localises to the cytoplasm. It localises to the cytoskeleton. Its function is as follows. Binds to actin and affects the structure of the cytoskeleton. At high concentrations, profilin prevents the polymerization of actin, whereas it enhances it at low concentrations. The sequence is that of Profilin-1 from Olea europaea (Common olive).